The following is a 379-amino-acid chain: Anhydro-N-acetylmuramic acid kinase (379 aa).

9–16 (GTSVDGID) contributes to the ATP binding site.

It belongs to the anhydro-N-acetylmuramic acid kinase family.

It carries out the reaction 1,6-anhydro-N-acetyl-beta-muramate + ATP + H2O = N-acetyl-D-muramate 6-phosphate + ADP + H(+). It participates in amino-sugar metabolism; 1,6-anhydro-N-acetylmuramate degradation. Its pathway is cell wall biogenesis; peptidoglycan recycling. Catalyzes the specific phosphorylation of 1,6-anhydro-N-acetylmuramic acid (anhMurNAc) with the simultaneous cleavage of the 1,6-anhydro ring, generating MurNAc-6-P. Is required for the utilization of anhMurNAc either imported from the medium or derived from its own cell wall murein, and thus plays a role in cell wall recycling. The polypeptide is Anhydro-N-acetylmuramic acid kinase (Picosynechococcus sp. (strain ATCC 27264 / PCC 7002 / PR-6) (Agmenellum quadruplicatum)).